Consider the following 115-residue polypeptide: Waprin-like protein (115 aa).

A signal peptide spans M1 to S21. One can recognise a WAP domain in the interval L23–S69. Disulfide bonds link C30–C56, C39–C60, C43–C55, and C49–C65.

This sequence belongs to the venom waprin family. Cys-rich waprin subfamily. As to expression, expressed by the venom gland.

It localises to the secreted. Its function is as follows. Antimicrobial peptides with activity against Gram-positive and Gram-negative bacteria as well as fungi. Recognizes carbohydrates in the microbial cell walls, and induces structural damage to them. Also inhibits microbial serine proteases, as well as mammalian elastases. Carbohydrates that are recognized are LPS, mannan, peptidoglycan, and N-acetl-D-glucosamine. This Tetramorium bicarinatum (Tramp ant) protein is Waprin-like protein.